A 267-amino-acid chain; its full sequence is Tryptophan synthase alpha chain (267 aa).

Active-site proton acceptor residues include E49 and D60.

Belongs to the TrpA family. As to quaternary structure, tetramer of two alpha and two beta chains.

It catalyses the reaction (1S,2R)-1-C-(indol-3-yl)glycerol 3-phosphate + L-serine = D-glyceraldehyde 3-phosphate + L-tryptophan + H2O. The protein operates within amino-acid biosynthesis; L-tryptophan biosynthesis; L-tryptophan from chorismate: step 5/5. In terms of biological role, the alpha subunit is responsible for the aldol cleavage of indoleglycerol phosphate to indole and glyceraldehyde 3-phosphate. The chain is Tryptophan synthase alpha chain from Methylococcus capsulatus (strain ATCC 33009 / NCIMB 11132 / Bath).